Here is a 769-residue protein sequence, read N- to C-terminus: Discoidin, CUB and LCCL domain-containing protein 2 (769 aa).

Over residues 1–29 (MASRAPLRAARSPQDPGGRAAPAATGRAP) the composition is skewed to low complexity. Positions 1–39 (MASRAPLRAARSPQDPGGRAAPAATGRAPLPSAGWCPLP) are disordered. Residues 1–63 (MASRAPLRAA…LLLLLPDAGA (63 aa)) form the signal peptide. Residues 64–523 (QKGDGCGHTV…VTPSVTKDVA (460 aa)) lie on the Extracellular side of the membrane. Disulfide bonds link cysteine 69–cysteine 96 and cysteine 123–cysteine 145. The CUB domain maps to 69-184 (CGHTVLGPES…RGFLASYSVI (116 aa)). N-linked (GlcNAc...) asparagine glycosylation is present at asparagine 92. A glycan (N-linked (GlcNAc...) asparagine) is linked at asparagine 152. In terms of domain architecture, LCCL spans 184-282 (IDKQDLITCL…MVGYLSTSLF (99 aa)). Cysteine 212 and cysteine 234 are oxidised to a cystine. Residue asparagine 269 is glycosylated (N-linked (GlcNAc...) asparagine). A disulfide bridge connects residues cysteine 289 and cysteine 446. The F5/8 type C domain occupies 289–446 (CYGTLGMESG…IAMKVELLGC (158 aa)). Residues 455-476 (PKLTQPPPPRNSNNLKNTTVHP) form a disordered region. The span at 465–474 (NSNNLKNTTV) shows a compositional bias: polar residues. N-linked (GlcNAc...) asparagine glycosylation is found at asparagine 471 and asparagine 511. A helical transmembrane segment spans residues 524–544 (LAAVLVPVLVMALTTLILILV). The Cytoplasmic portion of the chain corresponds to 545-769 (CAWHWRNRKK…EKFDAFKETL (225 aa)). Serine 601 is subject to Phosphoserine. The tract at residues 719–769 (SCSSGQAQYDTPKGGKPAAAPEELVYQVPQSTQEASGAGRDEKFDAFKETL) is disordered. The span at 757–769 (GRDEKFDAFKETL) shows a compositional bias: basic and acidic residues.

It localises to the membrane. This is Discoidin, CUB and LCCL domain-containing protein 2 (Dcbld2) from Rattus norvegicus (Rat).